A 273-amino-acid polypeptide reads, in one-letter code: Vitamin B12-binding protein (273 aa).

A signal peptide spans 1–18 (MMKTLSSLLLLFSVSLQA). The region spanning 23–273 (RVISLAPHAT…EHFASIEQKR (251 aa)) is the Fe/B12 periplasmic-binding domain. C183 and C263 are disulfide-bonded.

Belongs to the BtuF family. As to quaternary structure, the complex is composed of two ATP-binding proteins (BtuD), two transmembrane proteins (BtuC) and a solute-binding protein (BtuF).

The protein resides in the periplasm. In terms of biological role, part of the ABC transporter complex BtuCDF involved in vitamin B12 import. Binds vitamin B12 and delivers it to the periplasmic surface of BtuC. This Vibrio vulnificus (strain CMCP6) protein is Vitamin B12-binding protein.